The following is a 322-amino-acid chain: Ribosomal RNA small subunit methyltransferase H (322 aa).

S-adenosyl-L-methionine-binding positions include 40 to 42, D60, F84, D106, and Q113; that span reads GGH.

This sequence belongs to the methyltransferase superfamily. RsmH family.

Its subcellular location is the cytoplasm. The catalysed reaction is cytidine(1402) in 16S rRNA + S-adenosyl-L-methionine = N(4)-methylcytidine(1402) in 16S rRNA + S-adenosyl-L-homocysteine + H(+). Functionally, specifically methylates the N4 position of cytidine in position 1402 (C1402) of 16S rRNA. The sequence is that of Ribosomal RNA small subunit methyltransferase H from Mannheimia succiniciproducens (strain KCTC 0769BP / MBEL55E).